Consider the following 283-residue polypeptide: Ribosomal RNA small subunit methyltransferase I (283 aa).

The protein belongs to the methyltransferase superfamily. RsmI family.

It localises to the cytoplasm. The enzyme catalyses cytidine(1402) in 16S rRNA + S-adenosyl-L-methionine = 2'-O-methylcytidine(1402) in 16S rRNA + S-adenosyl-L-homocysteine + H(+). Its function is as follows. Catalyzes the 2'-O-methylation of the ribose of cytidine 1402 (C1402) in 16S rRNA. This chain is Ribosomal RNA small subunit methyltransferase I, found in Haemophilus influenzae (strain ATCC 51907 / DSM 11121 / KW20 / Rd).